The sequence spans 197 residues: dTTP/UTP pyrophosphatase (197 aa).

Aspartate 70 serves as the catalytic Proton acceptor.

The protein belongs to the Maf family. YhdE subfamily. Requires a divalent metal cation as cofactor.

The protein resides in the cytoplasm. The catalysed reaction is dTTP + H2O = dTMP + diphosphate + H(+). It carries out the reaction UTP + H2O = UMP + diphosphate + H(+). In terms of biological role, nucleoside triphosphate pyrophosphatase that hydrolyzes dTTP and UTP. May have a dual role in cell division arrest and in preventing the incorporation of modified nucleotides into cellular nucleic acids. The polypeptide is dTTP/UTP pyrophosphatase (yceF2) (Escherichia coli O6:K15:H31 (strain 536 / UPEC)).